Reading from the N-terminus, the 218-residue chain is 7-cyano-7-deazaguanine synthase (218 aa).

ATP is bound at residue 11–21 (LSGGMDSATLL). 4 residues coordinate Zn(2+): C193, C201, C204, and C207.

Belongs to the QueC family. Requires Zn(2+) as cofactor.

The catalysed reaction is 7-carboxy-7-deazaguanine + NH4(+) + ATP = 7-cyano-7-deazaguanine + ADP + phosphate + H2O + H(+). The protein operates within purine metabolism; 7-cyano-7-deazaguanine biosynthesis. In terms of biological role, catalyzes the ATP-dependent conversion of 7-carboxy-7-deazaguanine (CDG) to 7-cyano-7-deazaguanine (preQ(0)). The chain is 7-cyano-7-deazaguanine synthase from Aquifex aeolicus (strain VF5).